The chain runs to 322 residues: MASMAAAIAASRSAVMSGNRPLDDRERKRFTYFSSLSPMARKIMQDKEKIREKYGPEWARLPPAQQDEIIDRCLVGPRAPAAAADAGDVRDPARFPGLRGPTGQKLVRFGDEDITWQDEHSAPFSWETRSQMEFSISSLSIQEPSAATVTSDARSLAKAPQGTQGSKPAQSSRSSSLDALGPARKEEEAPFWKINAERSREGPEAEFQSLTPSQIKSMEKGEKVLPACYRQEPTTKDREAKPVPQEQQTLPSVSAEQEVPQPVQAPASLLPKATPTESPEKPPPPAVQRDEDDDALFSEPALAQISSSNVLLKTGFDFLDNW.

Low complexity predominate over residues 1-17 (MASMAAAIAASRSAVMS). The tract at residues 1–22 (MASMAAAIAASRSAVMSGNRPL) is disordered. An N-acetylalanine modification is found at alanine 2. Serine 37 is subject to Phosphoserine. Residues 81-104 (AAAADAGDVRDPARFPGLRGPTGQ) form a disordered region. Serine 130 carries the phosphoserine modification. Polar residues-rich tracts occupy residues 142 to 153 (QEPSAATVTSDA) and 161 to 177 (QGTQ…SSSL). Residues 142-301 (QEPSAATVTS…DDDALFSEPA (160 aa)) are disordered. Serine 176 carries the phosphoserine modification. Positions 183–203 (ARKEEEAPFWKINAERSREGP) are enriched in basic and acidic residues. A compositionally biased stretch (polar residues) spans 245-255 (QEQQTLPSVSA).

It is found in the cytoplasm. This is an uncharacterized protein from Mus musculus (Mouse).